A 61-amino-acid polypeptide reads, in one-letter code: Metallothionein-1 (61 aa).

N-acetylmethionine is present on methionine 1. Residues 1–29 form a beta region; that stretch reads MDPNCSCATGVSCTCADSCKCKECKCTSC. Residues cysteine 5, cysteine 7, cysteine 13, cysteine 15, cysteine 19, cysteine 21, cysteine 24, cysteine 26, cysteine 29, cysteine 33, cysteine 34, cysteine 36, cysteine 37, cysteine 41, cysteine 44, cysteine 48, cysteine 50, cysteine 57, cysteine 59, and cysteine 60 each coordinate a divalent metal cation. Positions 30–61 are alpha; that stretch reads KKSCCSCCPVGCAKCAQGCVCKGASEKCNCCA.

Belongs to the metallothionein superfamily. Type 1 family.

Metallothioneins have a high content of cysteine residues that bind various heavy metals; these proteins are transcriptionally regulated by both heavy metals and glucocorticoids. The chain is Metallothionein-1 (MT1) from Chlorocebus aethiops (Green monkey).